The sequence spans 365 residues: 5-hydroxytryptamine receptor 1E (365 aa).

The Extracellular segment spans residues 1-22 (MNITNCTTDASMVVRPKTVTEK). Residues Asn2 and Asn5 are each glycosylated (N-linked (GlcNAc...) asparagine). A helical membrane pass occupies residues 23–47 (MLICMTLVIITTLTMLLNSAVIMAI). Residues 48–59 (CTTKKLHQPANY) lie on the Cytoplasmic side of the membrane. Residues 60 to 82 (LICSLAVTDLLVAVLVMPLSIMY) form a helical membrane-spanning segment. Residues 83-96 (IVMDSWRLGYFICE) lie on the Extracellular side of the membrane. Cysteines 95 and 173 form a disulfide. Residues 97–118 (VWLSVDMTCCTCSILHLCVIAL) traverse the membrane as a helical segment. Positions 102 and 107 each coordinate ergotamine. The DRY motif; important for ligand-induced conformation changes signature appears at 119–121 (DRY). At 119–138 (DRYWAITNAIEYARKRTAKR) the chain is on the cytoplasmic side. The helical transmembrane segment at 139 to 160 (AGLMILTVWTISIFISMPPLFW) threads the bilayer. Residues 161-179 (RSHRQLSPPPSQCTIQHDH) lie on the Extracellular side of the membrane. Residue Ile175 coordinates ergotamine. A helical transmembrane segment spans residues 180–202 (VIYTIYSTFGAFYIPLTLILILY). Topologically, residues 203 to 291 (YRIYHAAKSL…SSTRERKAAR (89 aa)) are cytoplasmic. The helical transmembrane segment at 292 to 314 (ILGLILGAFILSWLPFFIKELIV) threads the bilayer. Over 315–324 (GLSIYTVSSE) the chain is Extracellular. Residues 325–347 (VGDFLTWLGYVNSLINPLLYTSF) traverse the membrane as a helical segment. An NPxxY motif; important for ligand-induced conformation changes and signaling motif is present at residues 340–344 (NPLLY). Residues 348 to 365 (NEDFKLAFKKLIRCREHT) lie on the Cytoplasmic side of the membrane.

The protein belongs to the G-protein coupled receptor 1 family. In terms of tissue distribution, detected in the brain with the greatest abundance in the hippocampus, followed by the olfactory bulb. Lower levels are detected in the cortex, thalamus, pons, hypothalamus, midbrain, striatum, and cerebellum.

The protein localises to the cell membrane. G-protein coupled receptor for 5-hydroxytryptamine (serotonin). Also functions as a receptor for various alkaloids and psychoactive substances. Ligand binding causes a conformation change that triggers signaling via guanine nucleotide-binding proteins (G proteins) and modulates the activity of down-stream effectors, such as adenylate cyclase. Signaling inhibits adenylate cyclase activity. This chain is 5-hydroxytryptamine receptor 1E (5HT1E), found in Cavia porcellus (Guinea pig).